We begin with the raw amino-acid sequence, 198 residues long: Adenylyl-sulfate kinase (198 aa).

Residue 31 to 38 coordinates ATP; that stretch reads GLSGAGKS. The Phosphoserine intermediate role is filled by Ser105.

The protein belongs to the APS kinase family.

It carries out the reaction adenosine 5'-phosphosulfate + ATP = 3'-phosphoadenylyl sulfate + ADP + H(+). The protein operates within sulfur metabolism; hydrogen sulfide biosynthesis; sulfite from sulfate: step 2/3. Its function is as follows. Catalyzes the synthesis of activated sulfate. The chain is Adenylyl-sulfate kinase from Shewanella amazonensis (strain ATCC BAA-1098 / SB2B).